The primary structure comprises 219 residues: 7-cyano-7-deazaguanine synthase (219 aa).

Residue 10 to 20 (FSGGQDSTTCL) participates in ATP binding. 4 residues coordinate Zn(2+): C188, C197, C200, and C203.

It belongs to the QueC family. In terms of assembly, homodimer. Zn(2+) serves as cofactor.

The catalysed reaction is 7-carboxy-7-deazaguanine + NH4(+) + ATP = 7-cyano-7-deazaguanine + ADP + phosphate + H2O + H(+). Its pathway is purine metabolism; 7-cyano-7-deazaguanine biosynthesis. Catalyzes the ATP-dependent conversion of 7-carboxy-7-deazaguanine (CDG) to 7-cyano-7-deazaguanine (preQ(0)). This chain is 7-cyano-7-deazaguanine synthase, found in Clostridium botulinum (strain 657 / Type Ba4).